A 412-amino-acid chain; its full sequence is Isocitrate dehydrogenase [NADP] (412 aa).

NADP(+) is bound at residue Thr100. D-threo-isocitrate-binding residues include Ser109, Asn111, Arg115, Arg125, and Arg149. Asp301 contacts Mg(2+). NADP(+) is bound by residues 333–339 (HGSAPKY), Asn346, Tyr385, and Arg389.

The protein belongs to the isocitrate and isopropylmalate dehydrogenases family. Homodimer. Mg(2+) serves as cofactor. Requires Mn(2+) as cofactor.

The catalysed reaction is D-threo-isocitrate + NADP(+) = 2-oxoglutarate + CO2 + NADPH. Catalyzes the oxidative decarboxylation of isocitrate to 2-oxoglutarate and carbon dioxide with the concomitant reduction of NADP(+). NAD(+) can replace NADP(+) with low efficiency. The chain is Isocitrate dehydrogenase [NADP] from Archaeoglobus fulgidus (strain ATCC 49558 / DSM 4304 / JCM 9628 / NBRC 100126 / VC-16).